The chain runs to 24 residues: Outer membrane protein (24 aa).

The protein belongs to the Gram-negative porin family. In terms of assembly, homotrimer.

It is found in the cell outer membrane. Functionally, forms pores that allow passive diffusion of small molecules across the outer membrane. This chain is Outer membrane protein, found in Sodalis glossinidius.